The following is a 164-amino-acid chain: Lipoprotein signal peptidase (164 aa).

4 consecutive transmembrane segments (helical) span residues 8 to 28 (IVAAVAALIADQASKLWLLFV), 39 to 59 (VTPFFDLVLAWNTGISYGWFQ), 64 to 84 (VGATILLAIKAGAVVLLAIWM), and 91 to 111 (LATIGLGLIIGGAIGNAIDRF). Catalysis depends on residues Asp-118 and Asp-140. Residues 131–151 (YSWYVFNLADVAIVAGVIALL) traverse the membrane as a helical segment.

Belongs to the peptidase A8 family.

Its subcellular location is the cell inner membrane. The enzyme catalyses Release of signal peptides from bacterial membrane prolipoproteins. Hydrolyzes -Xaa-Yaa-Zaa-|-(S,diacylglyceryl)Cys-, in which Xaa is hydrophobic (preferably Leu), and Yaa (Ala or Ser) and Zaa (Gly or Ala) have small, neutral side chains.. It participates in protein modification; lipoprotein biosynthesis (signal peptide cleavage). Its function is as follows. This protein specifically catalyzes the removal of signal peptides from prolipoproteins. This chain is Lipoprotein signal peptidase, found in Nitrobacter hamburgensis (strain DSM 10229 / NCIMB 13809 / X14).